Reading from the N-terminus, the 374-residue chain is Copper-containing nitrite reductase (374 aa).

The segment at residues 1 to 31 (MFTRRAALVGAAALASAPLVIRTAGAEEAPA) is a signal peptide (tat-type signal). 2 Plastocyanin-like domains span residues 93–189 (MTFD…IMVL) and 254–355 (GAVG…VLVE). Cu cation contacts are provided by histidine 126, histidine 131, histidine 166, cysteine 167, histidine 177, methionine 182, and histidine 338.

This sequence belongs to the multicopper oxidase family. In terms of assembly, homotrimer. Cu(2+) is required as a cofactor. The cofactor is Cu(+). Requires FAD as cofactor. Post-translationally, predicted to be exported by the Tat system. The position of the signal peptide cleavage has not been experimentally proven.

It is found in the periplasm. It catalyses the reaction nitric oxide + Fe(III)-[cytochrome c] + H2O = Fe(II)-[cytochrome c] + nitrite + 2 H(+). It functions in the pathway nitrogen metabolism; nitrate reduction (denitrification); dinitrogen from nitrate: step 2/4. The polypeptide is Copper-containing nitrite reductase (nirK) (Cereibacter sphaeroides (strain ATCC 17025 / ATH 2.4.3) (Rhodobacter sphaeroides)).